Reading from the N-terminus, the 344-residue chain is Nuclear distribution protein nudE homolog 1 (344 aa).

Positions 1 to 93 are self-association; that stretch reads MEDSGKTFGS…MQHSEGYRQI (93 aa). A coiled-coil region spans residues 18-188; the sequence is WRDLAMTYKQ…ELAVQQKQDK (171 aa). The span at 30 to 47 shows a compositional bias: basic and acidic residues; it reads ENTQEELREFQEGSREYE. The interval 30-65 is disordered; it reads ENTQEELREFQEGSREYEAELETQLQQAETRNRDLL. The interaction with PAFAH1B1 stretch occupies residues 88 to 156; that stretch reads EGYRQISALE…ERNAFLESEL (69 aa). Residues 167 to 290 are interaction with CENPF; that stretch reads QRLKDEARDL…QSPSRKSGPA (124 aa). The disordered stretch occupies residues 181–243; that stretch reads AVQQKQDKPR…CGLGSPSSGT (63 aa). Residues 208–230 show a composition bias toward polar residues; that stretch reads ATGSAPSTPITHQGSSSGLNTPE. Ser-211 is subject to Phosphoserine. Phosphothreonine occurs at positions 215, 228, 243, and 246. Cys-274 carries S-palmitoyl cysteine; by ZDHHC2, ZDHHC3 and ZDHHC7 lipidation. Residues 279-337 are disordered; it reads YDQSPSRKSGPALGRGTKNRDGIDRRPGSTAVGDKGSGKRLEFAKPSSQLSSPALPSTQ. Ser-282 is modified (phosphoserine). Residues 296–305 show a composition bias toward basic and acidic residues; that stretch reads KNRDGIDRRP. The segment covering 324–335 has biased composition (low complexity); the sequence is PSSQLSSPALPS.

Belongs to the nudE family. In terms of assembly, homodimer. Interacts with CNTRL, LIS1, dynein, SLMAP and TCP1. Interacts with CENPF, dynactin, tubulin gamma, PAFAH1B1, PCM1 and PCNT. Interacts with ZNF365. Interacts with GTP-bound RAB9A and RAB9B; the interaction leads to RAB9-dynein motor tethering. Interacts (via C-terminus) with MCRS1 (via C-terminus); phosphorylation of NDE1 inhibits the interaction. Post-translationally, phosphorylated in mitosis. Phosphorylation at Thr-246 is essential for the G2/M transition. In terms of tissue distribution, expressed in brain, heart, kidney, liver, lung, skeletal muscle, spleen and testis.

It is found in the cytoplasm. It localises to the cytoskeleton. Its subcellular location is the microtubule organizing center. The protein localises to the centrosome. The protein resides in the spindle. It is found in the chromosome. It localises to the centromere. Its subcellular location is the kinetochore. The protein localises to the cleavage furrow. The protein resides in the cytoplasmic vesicle membrane. In terms of biological role, required for centrosome duplication and formation and function of the mitotic spindle. Essential for the development of the cerebral cortex. May regulate the production of neurons by controlling the orientation of the mitotic spindle during division of cortical neuronal progenitors of the proliferative ventricular zone of the brain. Orientation of the division plane perpendicular to the layers of the cortex gives rise to two proliferative neuronal progenitors whereas parallel orientation of the division plane yields one proliferative neuronal progenitor and a postmitotic neuron. A premature shift towards a neuronal fate within the progenitor population may result in an overall reduction in the final number of neurons and an increase in the number of neurons in the deeper layers of the cortex. Acts as a RAB9A/B effector that tethers RAB9-associated late endosomes to the dynein motor for their retrograde transport to the trans-Golgi network. The sequence is that of Nuclear distribution protein nudE homolog 1 from Rattus norvegicus (Rat).